A 396-amino-acid chain; its full sequence is Phosphoglycerate kinase (396 aa).

Residues 21 to 23, arginine 36, 59 to 62, arginine 113, and arginine 146 contribute to the substrate site; these read DLN and HLGR. ATP-binding positions include lysine 197, glutamate 319, and 345-348; that span reads GGDT.

The protein belongs to the phosphoglycerate kinase family. In terms of assembly, monomer.

The protein localises to the cytoplasm. The catalysed reaction is (2R)-3-phosphoglycerate + ATP = (2R)-3-phospho-glyceroyl phosphate + ADP. It participates in carbohydrate degradation; glycolysis; pyruvate from D-glyceraldehyde 3-phosphate: step 2/5. The protein is Phosphoglycerate kinase of Legionella pneumophila (strain Paris).